Consider the following 290-residue polypeptide: Acetyl-coenzyme A carboxylase carboxyl transferase subunit beta (290 aa).

The CoA carboxyltransferase N-terminal domain occupies 28-290 (IMTKCPKCKK…SRGGDEWHTN (263 aa)). Residues C32, C35, C51, and C54 each contribute to the Zn(2+) site. The segment at 32–54 (CPKCKKIMYTKELVKNLRVCISC) adopts a C4-type zinc-finger fold.

Belongs to the AccD/PCCB family. As to quaternary structure, acetyl-CoA carboxylase is a heterohexamer composed of biotin carboxyl carrier protein (AccB), biotin carboxylase (AccC) and two subunits each of ACCase subunit alpha (AccA) and ACCase subunit beta (AccD). Zn(2+) is required as a cofactor.

It localises to the cytoplasm. The catalysed reaction is N(6)-carboxybiotinyl-L-lysyl-[protein] + acetyl-CoA = N(6)-biotinyl-L-lysyl-[protein] + malonyl-CoA. It participates in lipid metabolism; malonyl-CoA biosynthesis; malonyl-CoA from acetyl-CoA: step 1/1. Component of the acetyl coenzyme A carboxylase (ACC) complex. Biotin carboxylase (BC) catalyzes the carboxylation of biotin on its carrier protein (BCCP) and then the CO(2) group is transferred by the transcarboxylase to acetyl-CoA to form malonyl-CoA. The sequence is that of Acetyl-coenzyme A carboxylase carboxyl transferase subunit beta from Anoxybacillus flavithermus (strain DSM 21510 / WK1).